A 682-amino-acid chain; its full sequence is 1,4-alpha-glucan-branching enzyme (682 aa).

(1,4-alpha-D-glucosyl)n contacts are provided by W88 and K124. The Nucleophile role is filled by D342. E397 functions as the Proton donor in the catalytic mechanism.

This sequence belongs to the glycosyl hydrolase 13 family. GlgB subfamily.

The protein resides in the cytoplasm. The catalysed reaction is Transfers a segment of a (1-&gt;4)-alpha-D-glucan chain to a primary hydroxy group in a similar glucan chain.. It functions in the pathway glycan biosynthesis; glycogen biosynthesis. Functionally, glycogen-branching enzyme participates in the glycogen biosynthetic process along with glycogenin and glycogen synthase. Generates alpha-1,6-glucosidic branches from alpha-1,4-linked glucose chains, to increase solubility of the glycogen polymer. The chain is 1,4-alpha-glucan-branching enzyme from Cryptococcus neoformans var. grubii serotype A (strain H99 / ATCC 208821 / CBS 10515 / FGSC 9487) (Filobasidiella neoformans var. grubii).